Consider the following 175-residue polypeptide: Alpha-crystallin B chain (175 aa).

At M1 the chain carries N-acetylmethionine. The residue at position 19 (S19) is a Phosphoserine. An O-linked (GlcNAc) serine glycan is attached at S41. S45 and S59 each carry phosphoserine. The sHSP domain maps to 56–164 (RAPSWIDTGL…PERTIPITRE (109 aa)). H83 contacts Zn(2+). Position 92 is an N6-acetyllysine (K92). H104, E106, H111, and H119 together coordinate Zn(2+). Residues 139–175 (SDGVLTMNGPRKQASGPERTIPITREEKPAVTAAPKK) form a disordered region. K166 carries the post-translational modification N6-acetyllysine. T170 is a glycosylation site (O-linked (GlcNAc) threonine).

The protein belongs to the small heat shock protein (HSP20) family. In terms of assembly, heteromer composed of three CRYAA and one CRYAB subunits. Aggregates with homologous proteins, including the small heat shock protein HSPB1, to form large heteromeric complexes. Inter-subunit bridging via zinc ions enhances stability, which is crucial as there is no protein turn over in the lens. Interacts with HSPBAP1 and TTN/titin. Interacts with TMEM109; in the cellular response to DNA damage. Interacts with DES; binds rapidly during early stages of DES filament assembly and a reduced binding seen in the later stages. Interacts with ATP6V1A and with MTOR, forming a ternary complex.

The protein localises to the cytoplasm. The protein resides in the nucleus. Its subcellular location is the secreted. It localises to the lysosome. Functionally, may contribute to the transparency and refractive index of the lens. Has chaperone-like activity, preventing aggregation of various proteins under a wide range of stress conditions. In lens epithelial cells, stabilizes the ATP6V1A protein, preventing its degradation by the proteasome. The sequence is that of Alpha-crystallin B chain (CRYAB) from Ovis aries (Sheep).